The sequence spans 125 residues: Glycine cleavage system H protein (125 aa).

Residues 19-101 enclose the Lipoyl-binding domain; that stretch reads GAVVGITDFA…NGSGWFFKLT (83 aa). K60 is modified (N6-lipoyllysine).

Belongs to the GcvH family. In terms of assembly, the glycine cleavage system is composed of four proteins: P, T, L and H. Requires (R)-lipoate as cofactor.

Functionally, the glycine cleavage system catalyzes the degradation of glycine. The H protein shuttles the methylamine group of glycine from the P protein to the T protein. The chain is Glycine cleavage system H protein from Methylocella silvestris (strain DSM 15510 / CIP 108128 / LMG 27833 / NCIMB 13906 / BL2).